The chain runs to 422 residues: UPF0229 protein SO_2883 (422 aa).

The disordered stretch occupies residues 60–111 (SEPMFHQGKGGVRDRVHPGNDQFTRGDKIDRPQGGSGGGAGKGDASDSGEGN). Over residues 70–90 (GVRDRVHPGNDQFTRGDKIDR) the composition is skewed to basic and acidic residues.

This sequence belongs to the UPF0229 family.

This chain is UPF0229 protein SO_2883, found in Shewanella oneidensis (strain ATCC 700550 / JCM 31522 / CIP 106686 / LMG 19005 / NCIMB 14063 / MR-1).